Consider the following 306-residue polypeptide: Nod factor export ATP-binding protein I (306 aa).

Residues 8–238 (IDLVGVRKSF…HIGCNVIEIY (231 aa)) enclose the ABC transporter domain. 40-47 (GPNGAGKS) provides a ligand contact to ATP.

This sequence belongs to the ABC transporter superfamily. Lipooligosaccharide exporter (TC 3.A.1.102) family. The complex is composed of two ATP-binding proteins (NodI) and two transmembrane proteins (NodJ).

It is found in the cell inner membrane. Functionally, part of the ABC transporter complex NodIJ involved in the export of the nodulation factors (Nod factors), the bacterial signal molecules that induce symbiosis and subsequent nodulation induction. Nod factors are LCO (lipo-chitin oligosaccharide), a modified beta-1,4-linked N-acetylglucosamine oligosaccharide. This subunit is responsible for energy coupling to the transport system. In Bradyrhizobium diazoefficiens (strain JCM 10833 / BCRC 13528 / IAM 13628 / NBRC 14792 / USDA 110), this protein is Nod factor export ATP-binding protein I.